Here is a 72-residue protein sequence, read N- to C-terminus: Translation initiation factor IF-1 (72 aa).

An S1-like domain is found at 1-72; sequence MSKEDVIEMQ…TRGRITWRAK (72 aa).

This sequence belongs to the IF-1 family. In terms of assembly, component of the 30S ribosomal translation pre-initiation complex which assembles on the 30S ribosome in the order IF-2 and IF-3, IF-1 and N-formylmethionyl-tRNA(fMet); mRNA recruitment can occur at any time during PIC assembly.

Its subcellular location is the cytoplasm. In terms of biological role, one of the essential components for the initiation of protein synthesis. Stabilizes the binding of IF-2 and IF-3 on the 30S subunit to which N-formylmethionyl-tRNA(fMet) subsequently binds. Helps modulate mRNA selection, yielding the 30S pre-initiation complex (PIC). Upon addition of the 50S ribosomal subunit IF-1, IF-2 and IF-3 are released leaving the mature 70S translation initiation complex. The protein is Translation initiation factor IF-1 of Clostridium acetobutylicum (strain ATCC 824 / DSM 792 / JCM 1419 / IAM 19013 / LMG 5710 / NBRC 13948 / NRRL B-527 / VKM B-1787 / 2291 / W).